The primary structure comprises 103 residues: SOSS complex subunit C (103 aa).

This sequence belongs to the SOSS-C family. In terms of assembly, belongs to the multiprotein complex Integrator. Component of the SOSS complex, composed of soss-b (soss-b1/nabp2 or soss-b2/nabp1), soss-a/ints3 and soss-c/inip.

Its subcellular location is the nucleus. Component of the SOSS complex, a multiprotein complex that functions downstream of the MRN complex to promote DNA repair and G2/M checkpoint. The SOSS complex associates with single-stranded DNA at DNA lesions and influences diverse endpoints in the cellular DNA damage response including cell-cycle checkpoint activation, recombinational repair and maintenance of genomic stability. Required for efficient homologous recombination-dependent repair of double-strand breaks (DSBs). In Danio rerio (Zebrafish), this protein is SOSS complex subunit C (inip).